We begin with the raw amino-acid sequence, 642 residues long: Bud site selection protein 5 (642 aa).

The N-terminal Ras-GEF domain maps to 224-339 (EVFRIQLYLN…DIVQLFINKK (116 aa)). One can recognise a Ras-GEF domain in the interval 412 to 640 (SPWSLAKTLT…YQVSIAKVPR (229 aa)).

Interacts with AXL2, BEM1, GSP1 and in haploid cells with AXL1.

It is found in the bud neck. It localises to the cytoplasm. The protein localises to the cell cortex. In terms of biological role, GDP-GTP exchange factor (GEF) for the small GTPase BUD1/RSR1. Regulates the activity of BUD1 together with BUD2 which is a GTPase-activating protein (GAP) of BUD1. Required to produce both the axial and bipolar patterns of bud site selection. Determines the orientation of division axis. Overexpression can suppress mutations in PRP20 which is the GEF for GSP1. May be a cytoplasmic GEF for GSP1. Might also act on the Ras-like protein CDC42. Appears to bind to Ras proteins but not to activate them. This chain is Bud site selection protein 5 (BUD5), found in Saccharomyces cerevisiae (strain ATCC 204508 / S288c) (Baker's yeast).